The primary structure comprises 269 residues: Tryptophan synthase alpha chain (269 aa).

Residues E49 and D60 each act as proton acceptor in the active site.

The protein belongs to the TrpA family. Tetramer of two alpha and two beta chains.

The enzyme catalyses (1S,2R)-1-C-(indol-3-yl)glycerol 3-phosphate + L-serine = D-glyceraldehyde 3-phosphate + L-tryptophan + H2O. It functions in the pathway amino-acid biosynthesis; L-tryptophan biosynthesis; L-tryptophan from chorismate: step 5/5. The alpha subunit is responsible for the aldol cleavage of indoleglycerol phosphate to indole and glyceraldehyde 3-phosphate. The polypeptide is Tryptophan synthase alpha chain (Actinobacillus pleuropneumoniae serotype 7 (strain AP76)).